Here is a 101-residue protein sequence, read N- to C-terminus: NAD(P)H-quinone oxidoreductase subunit 4L, chloroplastic (101 aa).

The next 3 helical transmembrane spans lie at 2–22 (MLEH…YGLI), 32–52 (MCLE…SDFF), and 61–81 (IFSI…LAIV).

It belongs to the complex I subunit 4L family. NDH is composed of at least 16 different subunits, 5 of which are encoded in the nucleus.

The protein localises to the plastid. It localises to the chloroplast thylakoid membrane. The enzyme catalyses a plastoquinone + NADH + (n+1) H(+)(in) = a plastoquinol + NAD(+) + n H(+)(out). It carries out the reaction a plastoquinone + NADPH + (n+1) H(+)(in) = a plastoquinol + NADP(+) + n H(+)(out). NDH shuttles electrons from NAD(P)H:plastoquinone, via FMN and iron-sulfur (Fe-S) centers, to quinones in the photosynthetic chain and possibly in a chloroplast respiratory chain. The immediate electron acceptor for the enzyme in this species is believed to be plastoquinone. Couples the redox reaction to proton translocation, and thus conserves the redox energy in a proton gradient. This Helianthus annuus (Common sunflower) protein is NAD(P)H-quinone oxidoreductase subunit 4L, chloroplastic.